A 134-amino-acid chain; its full sequence is UPF0412 protein YaaI (134 aa).

The signal sequence occupies residues 1 to 23 (MKSVITISASLAISLMLCCTAQA).

Belongs to the UPF0412 family.

This is UPF0412 protein YaaI from Escherichia coli O127:H6 (strain E2348/69 / EPEC).